We begin with the raw amino-acid sequence, 748 residues long: Choline O-acetyltransferase (748 aa).

A compositionally biased stretch (basic residues) spans 1 to 10; the sequence is MGLRTAKKRG. The tract at residues 1–89 is disordered; the sequence is MGLRTAKKRG…EWCGAASAEA (89 aa). The segment covering 17–32 has biased composition (basic and acidic residues); sequence WKREEGGGTRGRREVR. Over residues 40 to 53 the composition is skewed to gly residues; that stretch reads GGRGDPGDVGGPAG. Composition is skewed to low complexity over residues 54–65 and 73–89; these read NPGCSPHPRAAT and HTPAHTPEWCGAASAEA. Residue Ser125 is modified to Phosphoserine. The active-site Proton acceptor is His442. Position 473 is a phosphoserine (Ser473). CoA is bound by residues 520 to 532, Ser558, and Gln659; that span reads GKTFIKKQKCSPD. The disordered stretch occupies residues 727 to 748; sequence PTESKPLATKEKATRPSQGHQP.

Belongs to the carnitine/choline acetyltransferase family.

The catalysed reaction is choline + acetyl-CoA = acetylcholine + CoA. Its function is as follows. Catalyzes the reversible synthesis of acetylcholine (ACh) from acetyl CoA and choline at cholinergic synapses. In Homo sapiens (Human), this protein is Choline O-acetyltransferase (CHAT).